Consider the following 355-residue polypeptide: Putative arylamide transporter (355 aa).

The next 6 membrane-spanning stretches (helical) occupy residues 22–42 (TVLW…YLTH), 44–64 (VFNH…MSAT), 71–91 (RAQQ…GVHA), 92–112 (LLGS…SVAV), 119–139 (VAQG…VLVF), and 150–170 (LFDA…LFPP).

Its subcellular location is the cell membrane. May be involved in the import of arylamide compounds. This is Putative arylamide transporter from Mycobacterium bovis (strain ATCC BAA-935 / AF2122/97).